The chain runs to 499 residues: Apolipoprotein N-acyltransferase (499 aa).

6 helical membrane-spanning segments follow: residues 17 to 37 (VLAG…ALAL), 38 to 58 (LWSA…AVLL), 84 to 104 (ASIW…WAWL), 131 to 151 (IWGL…GVGG), 163 to 183 (LARW…GWWL), and 198 to 218 (RSLL…WSLL). The region spanning 232–458 (WQPAIPTRSK…EGVGLADLHF (227 aa)) is the CN hydrolase domain. Residue E273 is the Proton acceptor of the active site. Residue K322 is part of the active site. The active-site Nucleophile is the C370. The helical transmembrane segment at 474–494 (IGLMLFAVVGLGLSRVRSWLI) threads the bilayer.

The protein belongs to the CN hydrolase family. Apolipoprotein N-acyltransferase subfamily.

It is found in the cell inner membrane. It carries out the reaction N-terminal S-1,2-diacyl-sn-glyceryl-L-cysteinyl-[lipoprotein] + a glycerophospholipid = N-acyl-S-1,2-diacyl-sn-glyceryl-L-cysteinyl-[lipoprotein] + a 2-acyl-sn-glycero-3-phospholipid + H(+). It functions in the pathway protein modification; lipoprotein biosynthesis (N-acyl transfer). Its function is as follows. Catalyzes the phospholipid dependent N-acylation of the N-terminal cysteine of apolipoprotein, the last step in lipoprotein maturation. The protein is Apolipoprotein N-acyltransferase of Prochlorococcus marinus (strain MIT 9313).